Reading from the N-terminus, the 843-residue chain is Protein P (843 aa).

Residues 1-177 (MPLSYQHFRK…FCGSPYSWEQ (177 aa)) form a terminal protein domain (TP) region. Residues 178 to 346 (DLQHGRLVFQ…YCLCHIVNLI (169 aa)) form a spacer region. 2 disordered regions span residues 220-258 (KSRL…VGVE) and 292-319 (SKGH…SQGS). Residues 308–319 (PPNSSRSQSQGS) are compositionally biased toward low complexity. A polymerase/reverse transcriptase domain (RT) region spans residues 347-690 (DDWGPCAEHG…YLNLYPVARQ (344 aa)). One can recognise a Reverse transcriptase domain in the interval 357 to 600 (EHRIRTPRTP…YSLNFMGYVI (244 aa)). Mg(2+) contacts are provided by D429, D551, and D552.

It belongs to the hepadnaviridae P protein family.

It catalyses the reaction DNA(n) + a 2'-deoxyribonucleoside 5'-triphosphate = DNA(n+1) + diphosphate. It carries out the reaction Endonucleolytic cleavage to 5'-phosphomonoester.. Activated by host HSP70 and HSP40 in vitro to be able to bind the epsilon loop of the pgRNA. Because deletion of the RNase H region renders the protein partly chaperone-independent, the chaperones may be needed indirectly to relieve occlusion of the RNA-binding site by this domain. Inhibited by several reverse-transcriptase inhibitors: Lamivudine, Adefovir and Entecavir. Functionally, multifunctional enzyme that converts the viral RNA genome into dsDNA in viral cytoplasmic capsids. This enzyme displays a DNA polymerase activity that can copy either DNA or RNA templates, and a ribonuclease H (RNase H) activity that cleaves the RNA strand of RNA-DNA heteroduplexes in a partially processive 3'- to 5'-endonucleasic mode. Neo-synthesized pregenomic RNA (pgRNA) are encapsidated together with the P protein, and reverse-transcribed inside the nucleocapsid. Initiation of reverse-transcription occurs first by binding the epsilon loop on the pgRNA genome, and is initiated by protein priming, thereby the 5'-end of (-)DNA is covalently linked to P protein. Partial (+)DNA is synthesized from the (-)DNA template and generates the relaxed circular DNA (RC-DNA) genome. After budding and infection, the RC-DNA migrates in the nucleus, and is converted into a plasmid-like covalently closed circular DNA (cccDNA). The activity of P protein does not seem to be necessary for cccDNA generation, and is presumably released from (+)DNA by host nuclear DNA repair machinery. This chain is Protein P, found in Hepatitis B virus genotype B1 (isolate Japan/Yamagata-2/1998) (HBV-B).